Reading from the N-terminus, the 109-residue chain is MYTKAVLLAFVGSAAAFNAPMMTVRRDAIATGAAAAVVAPLLRPAGAKMATDSKAPLIELFDERDGCKGPAANKASDVGEPGLCVKVSMQKVAMNAAAAKSVATNYMRK.

Residues V6, A16, F17, P20, D27, A28, and A39 each coordinate (2R,3E)-phycocyanobilin.

It belongs to the phycoerythrin family. As to quaternary structure, heterotetramer of 2 identical alpha chains and 2 identical beta chains which form 2 alpha-beta heterodimers within the heterotetramer. The two alpha-beta heterodimers are rotated to an open configuration in contrast to the closed configuration found in other cryptophyte species due to the insertion of a single amino acid, Asp-65, in a conserved region of the alpha chain. In the open form, the central chromophores are not in physical contact but are separated by a water-filled channel. Contains three phycocyanobilin chromophores with binding mediated by both the alpha and beta subunits.

It is found in the plastid. Its subcellular location is the chloroplast thylakoid membrane. In terms of biological role, light-harvesting photosynthetic tetrapyrrole chromophore-protein from the phycobiliprotein complex. The chain is Phycoerythrin alpha-1 subunit from Hemiselmis virescens.